The following is a 102-amino-acid chain: Small ribosomal subunit protein uS10 (102 aa).

Belongs to the universal ribosomal protein uS10 family. As to quaternary structure, part of the 30S ribosomal subunit.

Its function is as follows. Involved in the binding of tRNA to the ribosomes. The sequence is that of Small ribosomal subunit protein uS10 from Methanosarcina mazei (strain ATCC BAA-159 / DSM 3647 / Goe1 / Go1 / JCM 11833 / OCM 88) (Methanosarcina frisia).